The following is a 101-amino-acid chain: Putative defensin-like protein 86 (101 aa).

A signal peptide spans 1 to 27 (MAITKMSSLIILSLMMLTFIYIPMISG). Cystine bridges form between cysteine 35-cysteine 71, cysteine 39-cysteine 59, cysteine 45-cysteine 69, and cysteine 49-cysteine 70.

Belongs to the DEFL family.

The protein resides in the secreted. In Arabidopsis thaliana (Mouse-ear cress), this protein is Putative defensin-like protein 86 (LCR82).